The primary structure comprises 202 residues: Holliday junction branch migration complex subunit RuvA (202 aa).

Residues 1–63 (MIASLRGTVL…EDSMTLYGFT (63 aa)) are domain I. The segment at 64–142 (SQDDRDMFHV…AFAPAESADL (79 aa)) is domain II. The segment at 143–148 (SSAAPA) is flexible linker. The tract at residues 149-202 (AAGPVVEDVVEALIGLGFTDKMARPVVESVVAEQPDAATPVVLRAALSQLGAKK) is domain III.

Belongs to the RuvA family. As to quaternary structure, homotetramer. Forms an RuvA(8)-RuvB(12)-Holliday junction (HJ) complex. HJ DNA is sandwiched between 2 RuvA tetramers; dsDNA enters through RuvA and exits via RuvB. An RuvB hexamer assembles on each DNA strand where it exits the tetramer. Each RuvB hexamer is contacted by two RuvA subunits (via domain III) on 2 adjacent RuvB subunits; this complex drives branch migration. In the full resolvosome a probable DNA-RuvA(4)-RuvB(12)-RuvC(2) complex forms which resolves the HJ.

The protein localises to the cytoplasm. Its function is as follows. The RuvA-RuvB-RuvC complex processes Holliday junction (HJ) DNA during genetic recombination and DNA repair, while the RuvA-RuvB complex plays an important role in the rescue of blocked DNA replication forks via replication fork reversal (RFR). RuvA specifically binds to HJ cruciform DNA, conferring on it an open structure. The RuvB hexamer acts as an ATP-dependent pump, pulling dsDNA into and through the RuvAB complex. HJ branch migration allows RuvC to scan DNA until it finds its consensus sequence, where it cleaves and resolves the cruciform DNA. In Corynebacterium aurimucosum (strain ATCC 700975 / DSM 44827 / CIP 107346 / CN-1) (Corynebacterium nigricans), this protein is Holliday junction branch migration complex subunit RuvA.